The chain runs to 263 residues: Large ribosomal subunit protein uL10m (263 aa).

A mitochondrion-targeting transit peptide spans 1-29 (MPFSVEVEVFFLLVEDKLGWLPTLQPVRH). A disordered region spans residues 241–263 (QHEGDCATSTEGKPHPPDPAPDS).

This sequence belongs to the universal ribosomal protein uL10 family. In terms of assembly, component of the mitochondrial ribosome large subunit (39S) which comprises a 16S rRNA and about 50 distinct proteins.

The protein localises to the mitochondrion. The sequence is that of Large ribosomal subunit protein uL10m (Mrpl10) from Rattus norvegicus (Rat).